A 229-amino-acid chain; its full sequence is Homeobox-leucine zipper protein HOX3 (229 aa).

A disordered region spans residues 1–82; it reads MMGATSPSGL…GPHRPKKLRL (82 aa). The segment covering 52-68 has biased composition (acidic residues); it reads GEEEEFPMGSVEEDEEE. The segment at residues 75-134 is a DNA-binding region (homeobox); the sequence is HRPKKLRLSKEQSRLLEESFRLNHTLTPKQKEALAIKLKLRPRQVEVWFQNRRARTKLKQ. Residues 133–177 are leucine-zipper; it reads KQTEMECEYLKRCFGSLTEENRRLQREVEELRAMRVAPPTVLSPH. The segment at 198–229 is disordered; that stretch reads AATGPPAVRPPPSSAAAAAPSPFHPRRPSAAF.

It belongs to the HD-ZIP homeobox family. Class II subfamily. In terms of assembly, homodimer. May form a heterodimer with HOX1, HOX2 or HOX7. In terms of tissue distribution, expressed in seedlings, roots, leaves, nodes, internodes, flowers and embryo.

It is found in the nucleus. In terms of biological role, probable transcription repressor that binds to the DNA sequence 5'-CAAT[GC]ATTG-3'. The protein is Homeobox-leucine zipper protein HOX3 (HOX3) of Oryza sativa subsp. indica (Rice).